The primary structure comprises 160 residues: SsrA-binding protein (160 aa).

The segment at 131–160 (KKEYDKRHTERERDSDRELQRAVRTKGKED) is disordered.

It belongs to the SmpB family.

It is found in the cytoplasm. Functionally, required for rescue of stalled ribosomes mediated by trans-translation. Binds to transfer-messenger RNA (tmRNA), required for stable association of tmRNA with ribosomes. tmRNA and SmpB together mimic tRNA shape, replacing the anticodon stem-loop with SmpB. tmRNA is encoded by the ssrA gene; the 2 termini fold to resemble tRNA(Ala) and it encodes a 'tag peptide', a short internal open reading frame. During trans-translation Ala-aminoacylated tmRNA acts like a tRNA, entering the A-site of stalled ribosomes, displacing the stalled mRNA. The ribosome then switches to translate the ORF on the tmRNA; the nascent peptide is terminated with the 'tag peptide' encoded by the tmRNA and targeted for degradation. The ribosome is freed to recommence translation, which seems to be the essential function of trans-translation. The sequence is that of SsrA-binding protein from Pseudomonas fluorescens (strain ATCC BAA-477 / NRRL B-23932 / Pf-5).